Here is a 225-residue protein sequence, read N- to C-terminus: Cytidylate kinase (225 aa).

ATP is bound at residue 11–19; the sequence is GPAGAGKST.

The protein belongs to the cytidylate kinase family. Type 1 subfamily.

It localises to the cytoplasm. The catalysed reaction is CMP + ATP = CDP + ADP. It catalyses the reaction dCMP + ATP = dCDP + ADP. This is Cytidylate kinase from Shouchella clausii (strain KSM-K16) (Alkalihalobacillus clausii).